We begin with the raw amino-acid sequence, 176 residues long: NADH-dependent flavin reductase (176 aa).

FAD-binding positions include 39–46 (EDSVHGMT) and 48–49 (NA). Ser-52 is a binding site for NAD(+). FAD contacts are provided by residues 63–65 (SIS), 69–70 (KM), and 95–96 (HF). NAD(+)-binding positions include His-137 and 157 to 160 (FYTG).

The protein belongs to the non-flavoprotein flavin reductase family. In terms of assembly, homodimer. 4-nitrophenol 2-monooxygenase complex consists of an oxygenase component NphA1 and a flavin reductase component NphA2.

It catalyses the reaction a reduced flavin + NAD(+) = an oxidized flavin + NADH + 2 H(+). Functionally, catalyzes the reduction of FAD with the concomitant oxidation of NADH. NAD is the physiological electron donor. Subsequently, the reduced flavins diffuse to the oxygenase component NphA2. This chain is NADH-dependent flavin reductase (nphA2), found in Rhodococcus sp.